A 395-amino-acid chain; its full sequence is NKAP-like protein (395 aa).

2 disordered regions span residues 1-77 (MSPV…RPLP) and 91-247 (CGGY…ISCK). Phosphoserine occurs at positions 23 and 25. Polar residues predominate over residues 25 to 35 (SPPSALQTSRS). Basic and acidic residues predominate over residues 109–130 (DQEKEKEESYRQRRLKERERIG). S149 is subject to Phosphoserine. Positions 150–161 (DEHTPAEDEVKN) are enriched in basic and acidic residues. Basic residues-rich tracts occupy residues 177–197 (KTSH…KHKK) and 214–238 (KKVK…KRTK).

This sequence belongs to the NKAP family. As to quaternary structure, interacts with RBPJ, CIR1 and HDAC3. In terms of tissue distribution, specific to testis (at protein level). Detected in differenting spermatogonia and early spermatocytes (at protein level).

It localises to the nucleus. Its function is as follows. Transcriptional repressor of Notch-mediated signaling. Required for spermatogenesis. The chain is NKAP-like protein from Mus musculus (Mouse).